A 641-amino-acid polypeptide reads, in one-letter code: Sodium-dependent nutrient amino acid transporter 1 (641 aa).

The disordered stretch occupies residues M1–A34. At M1–N38 the chain is on the cytoplasmic side. Over residues S9–T24 the composition is skewed to low complexity. Basic and acidic residues predominate over residues E25–A34. The next 3 helical transmembrane spans lie at W39 to V59, G72 to L92, and S109 to I129. 2 N-linked (GlcNAc...) asparagine glycosylation sites follow: N183 and N188. 9 helical membrane passes run P229–M249, A258–V278, A307–S327, I341–L361, L401–L421, V441–G461, T474–L494, C516–I536, and I552–Y572.

This sequence belongs to the sodium:neurotransmitter symporter (SNF) (TC 2.A.22) family.

It localises to the membrane. In terms of biological role, unusual broad substrate spectrum amino acid:sodium cotransporter that promotes absorption of the D isomers of essential amino acids. Neutral amino acids are the preferred substrates, especially methionine and phenylalanine. In Drosophila yakuba (Fruit fly), this protein is Sodium-dependent nutrient amino acid transporter 1.